A 514-amino-acid chain; its full sequence is Ammonium transporter 1 member 2 (514 aa).

11 helical membrane-spanning segments follow: residues 56–76 (LLFS…LCAG), 91–111 (VLDA…FAFG), 140–160 (FFLY…GSIA), 165–185 (FVAY…TVSH), 212–232 (FAGS…GALV), 257–277 (VVLG…GSFL), 291–313 (GQWS…AALT), 328–348 (IDVC…CAVV), 351–371 (WAAI…NLLA), 380–400 (LEAA…TGLF), and 431–451 (IVQI…LFYG). The residue at position 472 (Thr-472) is a Phosphothreonine.

Belongs to the ammonia transporter channel (TC 1.A.11.2) family. As to expression, high expression in root.

It is found in the membrane. Functionally, ammonium transporter probably involved in ammonium uptake from the soil. This chain is Ammonium transporter 1 member 2 (AMT1-2), found in Arabidopsis thaliana (Mouse-ear cress).